The following is a 563-amino-acid chain: 4-hydroxy-7-methoxy-3-oxo-3,4-dihydro-2H-1,4-benzoxazin-2-yl glucoside beta-D-glucosidase 2, chloroplastic (563 aa).

The N-terminal 51 residues, 1-51, are a transit peptide targeting the chloroplast; that stretch reads MAPLLAAAMNHAAHPVLRSHLGPNNESFSRHHLSSSPQSSKRRFNLSFTPR. Residues 17-43 form a disordered region; it reads LRSHLGPNNESFSRHHLSSSPQSSKRR. Residues Gln89, His193, and 241–242 contribute to the a beta-D-glucoside site; that span reads NE. Glu242 functions as the Proton donor in the catalytic mechanism. A disulfide bridge connects residues Cys261 and Cys267. The tract at residues 322-358 is dimerization; the sequence is SFLDEQAKERSMDINLGWFLEPVVRGDYPFSMRSLAR. A beta-D-glucoside is bound at residue Tyr384. Dimerization stretches follow at residues 391 to 402 and 447 to 450; these read HIDISPKYSPVL and KYGN. A beta-D-glucoside contacts are provided by residues Glu457, Trp508, 515–516, and Tyr524; that span reads EW. The Nucleophile role is filled by Glu457.

Belongs to the glycosyl hydrolase 1 family. In terms of assembly, homo- and heterodimer. As to expression, expressed in leaves only starting at day 6 after germination.

It localises to the plastid. It is found in the chloroplast. The enzyme catalyses Hydrolysis of terminal, non-reducing beta-D-glucosyl residues with release of beta-D-glucose.. It carries out the reaction DIMBOA beta-D-glucoside + H2O = DIMBOA + D-glucose. It catalyses the reaction DIBOA beta-D-glucoside + H2O = DIBOA + D-glucose. Functionally, beta-glucosidase acting poorly on artificial aryl beta-glucosides. Has no activity toward the chromogenic substrate 6-bromo-2-naphthyl-beta-D-glucoside (6BNGlc). This Zea mays (Maize) protein is 4-hydroxy-7-methoxy-3-oxo-3,4-dihydro-2H-1,4-benzoxazin-2-yl glucoside beta-D-glucosidase 2, chloroplastic (GLU2).